Consider the following 271-residue polypeptide: Putative phosphoenolpyruvate synthase regulatory protein (271 aa).

Gly151–Thr158 lines the ADP pocket.

It belongs to the pyruvate, phosphate/water dikinase regulatory protein family. PSRP subfamily.

The catalysed reaction is [pyruvate, water dikinase] + ADP = [pyruvate, water dikinase]-phosphate + AMP + H(+). It carries out the reaction [pyruvate, water dikinase]-phosphate + phosphate + H(+) = [pyruvate, water dikinase] + diphosphate. Bifunctional serine/threonine kinase and phosphorylase involved in the regulation of the phosphoenolpyruvate synthase (PEPS) by catalyzing its phosphorylation/dephosphorylation. In Burkholderia multivorans (strain ATCC 17616 / 249), this protein is Putative phosphoenolpyruvate synthase regulatory protein.